Reading from the N-terminus, the 447-residue chain is MEGGRAPACTTQVSFVCQRCSQPLKLDTSFKILDRLTIQELTAPPLTAAPARPGDAQEESALSEEAFTEGRQDGVSRRFIPPARMMSTESANSFTLIGEASDGGTMENLSRRLKVTGDLFDIMSGQTDVDHPLCEECTDTLLDQLDTQLNITENECQNYKRCLEILEKMNEDDKEKLQTELKELALEEEQLIQELEDVEKNRKIVAEDFERVRAEAERLEQEEAQYQKEYCEFKRQQLELDDELKSVENQMRYAQMQLDKLKKTNVFNATFHIWHSGQFGTINNFRLGRLPSVPVEWNEINAAWGQTVLLLHALANKMGLKFQRYRLVPYGNHSYLESLTDKSKELPLYCSGGLRFFWDNKFDHAMVAFLDCVQQFKEEVEKGETRFCLPYRMDVEKGKIEDTGGSGGSYSIKTQFNSEEQWTKALKFMLTNLKWGLAWVSSQFYNK.

Residues 44–53 are compositionally biased toward low complexity; that stretch reads PPLTAAPARP. Residues 44 to 71 are disordered; the sequence is PPLTAAPARPGDAQEESALSEEAFTEGR. Positions 105–124 match the BH3 motif; the sequence is TMENLSRRLKVTGDLFDIMS. The stretch at 139–266 forms a coiled coil; it reads DTLLDQLDTQ…QLDKLKKTNV (128 aa). The evolutionary conserved domain (ECD) stretch occupies residues 242–447; it reads DELKSVENQM…AWVSSQFYNK (206 aa). Residues 422-447 form a required for membrane-association region; that stretch reads WTKALKFMLTNLKWGLAWVSSQFYNK.

Belongs to the beclin family. As to quaternary structure, component of the PI3K (PI3KC3/PI3K-III/class III phosphatidylinositol 3-kinase) complex. In terms of processing, may be proteolytically processed by caspases; the C-terminal fragment(s) may induce apoptosis.

Its subcellular location is the cytoplasm. The protein localises to the golgi apparatus. The protein resides in the trans-Golgi network membrane. It localises to the endosome membrane. It is found in the endoplasmic reticulum membrane. Its subcellular location is the mitochondrion membrane. The protein localises to the cytoplasmic vesicle. The protein resides in the autophagosome. In terms of biological role, plays a central role in autophagy. Acts as core subunit of different PI3K complex forms that mediate formation of phosphatidylinositol 3-phosphate and are believed to play a role in multiple membrane trafficking pathways such as initiation of autophagosomes, maturation of autophagosomes and endocytosis. Involved in regulation of degradative endocytic trafficking and required for the abscission step in cytokinesis, probably in the context of PI3KC3-C2. In Gallus gallus (Chicken), this protein is Beclin-1 (BECN1).